The following is a 178-amino-acid chain: Peptidyl-prolyl cis-trans isomerase H (178 aa).

In terms of domain architecture, PPIase cyclophilin-type spans 14-177 (FFDISIGDVP…LPVKITECGQ (164 aa)).

The protein belongs to the cyclophilin-type PPIase family. PPIase H subfamily.

It is found in the nucleus. The enzyme catalyses [protein]-peptidylproline (omega=180) = [protein]-peptidylproline (omega=0). PPIases accelerate the folding of proteins. It catalyzes the cis-trans isomerization of proline imidic peptide bonds in oligopeptides. The chain is Peptidyl-prolyl cis-trans isomerase H (cyp7) from Rhizopus delemar (strain RA 99-880 / ATCC MYA-4621 / FGSC 9543 / NRRL 43880) (Mucormycosis agent).